The chain runs to 395 residues: Succinyl-diaminopimelate desuccinylase (395 aa).

His81 is a Zn(2+) binding site. The active site involves Asp83. Asp114 contributes to the Zn(2+) binding site. Glu146 serves as the catalytic Proton acceptor. Residues Glu147, Glu175, and His364 each contribute to the Zn(2+) site.

This sequence belongs to the peptidase M20A family. DapE subfamily. Homodimer. Zn(2+) is required as a cofactor. It depends on Co(2+) as a cofactor.

It carries out the reaction N-succinyl-(2S,6S)-2,6-diaminopimelate + H2O = (2S,6S)-2,6-diaminopimelate + succinate. Its pathway is amino-acid biosynthesis; L-lysine biosynthesis via DAP pathway; LL-2,6-diaminopimelate from (S)-tetrahydrodipicolinate (succinylase route): step 3/3. Catalyzes the hydrolysis of N-succinyl-L,L-diaminopimelic acid (SDAP), forming succinate and LL-2,6-diaminopimelate (DAP), an intermediate involved in the bacterial biosynthesis of lysine and meso-diaminopimelic acid, an essential component of bacterial cell walls. This is Succinyl-diaminopimelate desuccinylase from Parvibaculum lavamentivorans (strain DS-1 / DSM 13023 / NCIMB 13966).